Reading from the N-terminus, the 482-residue chain is Glycogen synthase (482 aa).

An ADP-alpha-D-glucose-binding site is contributed by lysine 18.

The protein belongs to the glycosyltransferase 1 family. Bacterial/plant glycogen synthase subfamily.

It catalyses the reaction [(1-&gt;4)-alpha-D-glucosyl](n) + ADP-alpha-D-glucose = [(1-&gt;4)-alpha-D-glucosyl](n+1) + ADP + H(+). The protein operates within glycan biosynthesis; glycogen biosynthesis. Its function is as follows. Synthesizes alpha-1,4-glucan chains using ADP-glucose. The sequence is that of Glycogen synthase from Rhodopseudomonas palustris (strain HaA2).